A 357-amino-acid polypeptide reads, in one-letter code: Acyl-coenzyme A diphosphatase NUDT19 (357 aa).

One can recognise a Nudix hydrolase domain in the interval 10 to 242; sequence AATVMLAAGW…IWLAPPQFYE (233 aa). The segment at 72–93 is disordered; sequence PRFGLGPEPPRQPPFPGLSHGD. The segment covering 78–87 has biased composition (pro residues); sequence PEPPRQPPFP. Positions 97–118 match the Nudix box motif; the sequence is AALPDDVALRICAIREAFEEAG. E112 and E116 together coordinate Mg(2+). An N6-succinyllysine modification is found at K300. The Microbody targeting signal signature appears at 355–357; it reads AHL.

Belongs to the Nudix hydrolase family. In terms of assembly, monomer. The cofactor is Mg(2+). Mn(2+) serves as cofactor. In terms of tissue distribution, highly expressed in the kidneys, with lower levels in skeletal muscle and brain (at protein level).

Its subcellular location is the peroxisome. It carries out the reaction an acyl-CoA + H2O = an acyl-4'-phosphopantetheine + adenosine 3',5'-bisphosphate + 2 H(+). The enzyme catalyses CoA + H2O = (R)-4'-phosphopantetheine + adenosine 3',5'-bisphosphate + 2 H(+). It catalyses the reaction hexanoyl-CoA + H2O = hexanoyl-4'-phosphopantetheine + adenosine 3',5'-bisphosphate + 2 H(+). The catalysed reaction is octanoyl-CoA + H2O = S-octanoyl-4'-phosphopantetheine + adenosine 3',5'-bisphosphate + 2 H(+). It carries out the reaction butanoyl-CoA + H2O = S-butanoyl-4'-phosphopantetheine + adenosine 3',5'-bisphosphate + 2 H(+). The enzyme catalyses propanoyl-CoA + H2O = propanoyl-4'-phosphopantetheine + adenosine 3',5'-bisphosphate + 2 H(+). It catalyses the reaction malonyl-CoA + H2O = malonyl-4'-phosphopantetheine + adenosine 3',5'-bisphosphate + 2 H(+). The catalysed reaction is succinyl-CoA + H2O = succinyl-4'-phosphopantetheine + adenosine 3',5'-bisphosphate + 2 H(+). It carries out the reaction choloyl-CoA + H2O = S-choloyl-4'-phosphopantetheine + adenosine 3',5'-bisphosphate + 2 H(+). The enzyme catalyses 4,8-dimethylnonanoyl-CoA + H2O = S-(4,8-dimethylnonanoyl)-4'-phosphopantetheine + adenosine 3',5'-bisphosphate + 2 H(+). It catalyses the reaction (9Z,12Z,15Z)-octadecatrienoyl-CoA + H2O = S-(9Z,12Z,15Z-octadecatrienoyl)-4'-phosphopantetheine + adenosine 3',5'-bisphosphate + 2 H(+). The catalysed reaction is (9Z,12Z)-octadecadienoyl-CoA + H2O = S-(9Z,12Z-octadecadienoyl)-4'-phosphopantetheine + adenosine 3',5'-bisphosphate + 2 H(+). It carries out the reaction (9Z)-hexadecenoyl-CoA + H2O = S-(9Z-hexadecenoyl)-4'-phosphopantetheine + adenosine 3',5'-bisphosphate + 2 H(+). The enzyme catalyses (9Z)-tetradecenoyl-CoA + H2O = S-(9Z-tetradecenoyl)-4'-phosphopantetheine + adenosine 3',5'-bisphosphate + 2 H(+). It catalyses the reaction (6Z)-octenoyl-CoA + H2O = S-(6Z-octenoyl)-4'-phosphopantetheine + adenosine 3',5'-bisphosphate + 2 H(+). The catalysed reaction is hexadecanoyl-CoA + H2O = S-hexadecanoyl-4'-phosphopantetheine + adenosine 3',5'-bisphosphate + 2 H(+). It carries out the reaction tetradecanoyl-CoA + H2O = tetradecanoyl-4'-phosphopantetheine + adenosine 3',5'-bisphosphate + 2 H(+). The enzyme catalyses dodecanoyl-CoA + H2O = S-dodecanoyl-4'-phosphopantetheine + adenosine 3',5'-bisphosphate + 2 H(+). It catalyses the reaction a 5'-end CoA-ribonucleoside in mRNA + H2O = a 5'-end phospho-adenosine-phospho-ribonucleoside in mRNA + (R)-4'-phosphopantetheine + 2 H(+). With respect to regulation, inhibited by chenodeoxycholic acid (CDCA) and its conjugated derivatives, taurochenodeoxycholic acid and glycochenodeoxycholic acid. Inhibited by fluoride. Its function is as follows. Fatty acyl-coenzyme A (CoA) diphosphatase that hydrolyzes fatty acyl-CoA to yield acyl-4'-phosphopantetheine and adenosine 3',5'-bisphosphate. Mediates the hydrolysis of a wide range of CoA esters, including choloyl-CoA and branched-chain fatty-acyl-CoA esters and at low substrate concentrations medium and long-chain fatty-acyl-CoA esters are the primary substrates. Highest activity seen with medium-chain acyl-CoA esters and higher rates of activity seen with the unsaturated acyl-CoA esters compared with the saturated esters. Exhibits decapping activity towards dpCoA-capped RNAs in vitro. The polypeptide is Acyl-coenzyme A diphosphatase NUDT19 (Nudt19) (Mus musculus (Mouse)).